Consider the following 380-residue polypeptide: Queuine tRNA-ribosyltransferase (380 aa).

Catalysis depends on Asp95, which acts as the Proton acceptor. Substrate is bound by residues 95–99 (DSGGF), Asp149, Gln192, and Gly219. The tract at residues 250–256 (GVGSPDA) is RNA binding. The active-site Nucleophile is Asp269. Positions 274–278 (TRIAR) are RNA binding; important for wobble base 34 recognition. Zn(2+) contacts are provided by Cys307, Cys309, Cys312, and His338.

The protein belongs to the queuine tRNA-ribosyltransferase family. As to quaternary structure, homodimer. Within each dimer, one monomer is responsible for RNA recognition and catalysis, while the other monomer binds to the replacement base PreQ1. It depends on Zn(2+) as a cofactor.

The enzyme catalyses 7-aminomethyl-7-carbaguanine + guanosine(34) in tRNA = 7-aminomethyl-7-carbaguanosine(34) in tRNA + guanine. It participates in tRNA modification; tRNA-queuosine biosynthesis. Functionally, catalyzes the base-exchange of a guanine (G) residue with the queuine precursor 7-aminomethyl-7-deazaguanine (PreQ1) at position 34 (anticodon wobble position) in tRNAs with GU(N) anticodons (tRNA-Asp, -Asn, -His and -Tyr). Catalysis occurs through a double-displacement mechanism. The nucleophile active site attacks the C1' of nucleotide 34 to detach the guanine base from the RNA, forming a covalent enzyme-RNA intermediate. The proton acceptor active site deprotonates the incoming PreQ1, allowing a nucleophilic attack on the C1' of the ribose to form the product. After dissociation, two additional enzymatic reactions on the tRNA convert PreQ1 to queuine (Q), resulting in the hypermodified nucleoside queuosine (7-(((4,5-cis-dihydroxy-2-cyclopenten-1-yl)amino)methyl)-7-deazaguanosine). This chain is Queuine tRNA-ribosyltransferase, found in Pediococcus pentosaceus (strain ATCC 25745 / CCUG 21536 / LMG 10740 / 183-1w).